Here is a 301-residue protein sequence, read N- to C-terminus: MQTNITSTKMSILVTGGTGVVGRQVVKSLELREKNINIRVGGRDQDKCNQLGFGKNSTFTRFDFMDPTTWDKSLEGVDRVFLIALPMDPTPEKSLGPFIEKCKERKLKKIVVLSVIDAERVPLVKIEQMVQGSGLTFVILRPPFFSENFSEGFMKHDIDQGTIRVPVGEHSVNWISTHDIGECASIVLMDSKFDGRTIEITGPKPINFKELSEVVSKNVGKQIRFEDIKPQEYKKCLMDRGISEPSANYLNELFTSAREDKLSKCTKGVNEITGHDPRSFEQFAKETFSNTSGSCTSKPVI.

It belongs to the NmrA-type oxidoreductase family.

Involved in development and cell differentiation. The protein is Prestalk A differentiation protein A (padA) of Dictyostelium discoideum (Social amoeba).